We begin with the raw amino-acid sequence, 248 residues long: Probable transcriptional regulatory protein RHECIAT_CH0003714 (248 aa).

This sequence belongs to the TACO1 family.

Its subcellular location is the cytoplasm. The protein is Probable transcriptional regulatory protein RHECIAT_CH0003714 of Rhizobium etli (strain CIAT 652).